The chain runs to 433 residues: Serine hydroxymethyltransferase (433 aa).

(6S)-5,6,7,8-tetrahydrofolate-binding positions include Leu-127 and 131 to 133 (GHL). Lys-236 carries the N6-(pyridoxal phosphate)lysine modification.

Belongs to the SHMT family. As to quaternary structure, homodimer. It depends on pyridoxal 5'-phosphate as a cofactor.

It is found in the cytoplasm. The catalysed reaction is (6R)-5,10-methylene-5,6,7,8-tetrahydrofolate + glycine + H2O = (6S)-5,6,7,8-tetrahydrofolate + L-serine. It participates in one-carbon metabolism; tetrahydrofolate interconversion. The protein operates within amino-acid biosynthesis; glycine biosynthesis; glycine from L-serine: step 1/1. Catalyzes the reversible interconversion of serine and glycine with tetrahydrofolate (THF) serving as the one-carbon carrier. This reaction serves as the major source of one-carbon groups required for the biosynthesis of purines, thymidylate, methionine, and other important biomolecules. Also exhibits THF-independent aldolase activity toward beta-hydroxyamino acids, producing glycine and aldehydes, via a retro-aldol mechanism. This chain is Serine hydroxymethyltransferase, found in Corynebacterium urealyticum (strain ATCC 43042 / DSM 7109).